We begin with the raw amino-acid sequence, 466 residues long: MTFNTETFMLKNQAAIQLYEEVKRQPIFDYHCHLDPKDIFEDRIFDNIVDLWLGGDHYKWRLMRANGISEAEITGPASNLEKFKAFARTLERAYGNPVYHWSAMELKNVFGVNEILTESNAEEIYHRLNHFLKEHKISPRRLIADSKVMFIGTTDYPLDTLKWHKKLAADESFKTVVAPTFRPDEAFIEHRHFVDFITKLGDITQKEITDFSTFIAAMEERIAYFAQNGCRASDISFTEIVFEQTDELELNDLFNKVCEGYIPNQSEISKWQTAVFMELCRLYKKYGFVTQVHFGALRNNHSTIFEKLGADVGVDSLGDQVALTVNMNRLLDSLVKKDSLPKMIWYNLNPAYNIAVANTLANFQANELGVRSYLQFGAGWWFADTKLGMISQMNALAEQGMLANFIGMLTDSRSFLSYQRHDYFRRILCTYLGEWIEEGEVPEDYQALGSMAKDIAYQNAVNYFKN.

The protein belongs to the metallo-dependent hydrolases superfamily. Uronate isomerase family.

The enzyme catalyses D-glucuronate = D-fructuronate. The catalysed reaction is aldehydo-D-galacturonate = keto-D-tagaturonate. The protein operates within carbohydrate metabolism; pentose and glucuronate interconversion. This Streptococcus agalactiae serotype III (strain NEM316) protein is Uronate isomerase.